Here is a 308-residue protein sequence, read N- to C-terminus: tRNA-cytidine(32) 2-sulfurtransferase (308 aa).

The PP-loop motif motif lies at 39–44 (SGGKDS). [4Fe-4S] cluster is bound by residues Cys114, Cys117, and Cys205.

This sequence belongs to the TtcA family. Homodimer. Requires Mg(2+) as cofactor. [4Fe-4S] cluster is required as a cofactor.

The protein localises to the cytoplasm. It carries out the reaction cytidine(32) in tRNA + S-sulfanyl-L-cysteinyl-[cysteine desulfurase] + AH2 + ATP = 2-thiocytidine(32) in tRNA + L-cysteinyl-[cysteine desulfurase] + A + AMP + diphosphate + H(+). It functions in the pathway tRNA modification. Catalyzes the ATP-dependent 2-thiolation of cytidine in position 32 of tRNA, to form 2-thiocytidine (s(2)C32). The sulfur atoms are provided by the cysteine/cysteine desulfurase (IscS) system. The polypeptide is tRNA-cytidine(32) 2-sulfurtransferase (Cupriavidus taiwanensis (strain DSM 17343 / BCRC 17206 / CCUG 44338 / CIP 107171 / LMG 19424 / R1) (Ralstonia taiwanensis (strain LMG 19424))).